The following is a 138-amino-acid chain: Large ribosomal subunit protein uL16 (138 aa).

Residues 1–13 (MLQPARRKYRKEQ) are compositionally biased toward basic residues. The disordered stretch occupies residues 1-22 (MLQPARRKYRKEQKGRNTGIAT).

It belongs to the universal ribosomal protein uL16 family. As to quaternary structure, part of the 50S ribosomal subunit.

In terms of biological role, binds 23S rRNA and is also seen to make contacts with the A and possibly P site tRNAs. The polypeptide is Large ribosomal subunit protein uL16 (Delftia acidovorans (strain DSM 14801 / SPH-1)).